Here is a 657-residue protein sequence, read N- to C-terminus: Cyclic-di-AMP phosphodiesterase PdeA (657 aa).

The next 2 helical transmembrane spans lie at 13-35 and 37-53; these read PLYGLIAATIILSVITFFFSWWL and ALVVVGGIILTVAMFYF. The PAS-like stretch occupies residues 74–137; sequence RSEEEALVEM…ITGNDEKGIM (64 aa). Positions 175–303 constitute a GGDEF domain; the sequence is NKSVFAVIFL…GGDQVVIKQP (129 aa). Residues 342-498 form a DHH region; the sequence is VFVMGHRYPD…IEATALLSGI (157 aa). Positions 347, 351, 353, 422, 446, and 501 each coordinate Mn(2+). A DHHA1 region spans residues 592–645; that stretch reads VITLRPDKLIGISARSLGQINVQVIMEKLGGGGHLSNAATQLKDVTIAEAEKQL.

It belongs to the GdpP/PdeA phosphodiesterase family. Heme b serves as cofactor. Mn(2+) is required as a cofactor.

It is found in the cell membrane. It carries out the reaction 3',3'-c-di-AMP + H2O = 5'-O-phosphonoadenylyl-(3'-&gt;5')-adenosine + H(+). Has phosphodiesterase (PDE) activity against cyclic-di-AMP (c-di-AMP). Overexpression decreases export of c-di-AMP, leads to slightly increased susceptibility to the antibiotic cefuroxime and somewhat slower growth in macrophages. There are at least 2 PDEs for c-di-AMP in this bacteria (this one and pgpH); this may be the major PDE for intracellular growth in host macrophages. During host infection c-di-AMP is secreted into the host cytoplasm which leads to interferon-beta production and secretion by the host. c-di-AMP is a second messenger that mediates growth, cell wall stability and virulence. May monitor cellular heme or NO levels. The sequence is that of Cyclic-di-AMP phosphodiesterase PdeA from Listeria monocytogenes serotype 1/2a (strain 10403S).